A 371-amino-acid chain; its full sequence is Mitogen-activated protein kinase homolog MMK2 (371 aa).

The Protein kinase domain occupies 37–323; sequence VPPIRSVGRG…VDEALCHPYM (287 aa). Residues 43–51 and lysine 66 contribute to the ATP site; that span reads VGRGAYGIV. The active-site Proton acceptor is aspartate 163. Residue threonine 195 is modified to Phosphothreonine. The short motif at 195 to 197 is the TXY element; it reads TEY. Residue tyrosine 197 is modified to Phosphotyrosine.

It belongs to the protein kinase superfamily. CMGC Ser/Thr protein kinase family. MAP kinase subfamily. The cofactor is Mg(2+). Dually phosphorylated on Thr-195 and Tyr-197, which activates the enzyme. Autophosphorylated.

The enzyme catalyses L-seryl-[protein] + ATP = O-phospho-L-seryl-[protein] + ADP + H(+). It catalyses the reaction L-threonyl-[protein] + ATP = O-phospho-L-threonyl-[protein] + ADP + H(+). With respect to regulation, activated by tyrosine and threonine phosphorylation. The chain is Mitogen-activated protein kinase homolog MMK2 (MMK2) from Medicago sativa (Alfalfa).